Here is a 485-residue protein sequence, read N- to C-terminus: Alginate biosynthesis protein AlgA (485 aa).

Belongs to the mannose-6-phosphate isomerase type 2 family. As to quaternary structure, monomer. It depends on Co(2+) as a cofactor.

The enzyme catalyses D-mannose 6-phosphate = D-fructose 6-phosphate. It catalyses the reaction alpha-D-mannose 1-phosphate + GTP + H(+) = GDP-alpha-D-mannose + diphosphate. It functions in the pathway nucleotide-sugar biosynthesis; GDP-alpha-D-mannose biosynthesis; GDP-alpha-D-mannose from alpha-D-mannose 1-phosphate (GTP route): step 1/1. Its pathway is nucleotide-sugar biosynthesis; GDP-alpha-D-mannose biosynthesis; alpha-D-mannose 1-phosphate from D-fructose 6-phosphate: step 1/2. In terms of biological role, produces a precursor for alginate polymerization. The alginate layer provides a protective barrier against host immune defenses and antibiotics. In Pseudomonas putida (strain ATCC 47054 / DSM 6125 / CFBP 8728 / NCIMB 11950 / KT2440), this protein is Alginate biosynthesis protein AlgA (algA).